Here is a 347-residue protein sequence, read N- to C-terminus: N-acetyl-gamma-glutamyl-phosphate reductase (347 aa).

Cysteine 151 is an active-site residue.

It belongs to the NAGSA dehydrogenase family. Type 1 subfamily.

It localises to the cytoplasm. It catalyses the reaction N-acetyl-L-glutamate 5-semialdehyde + phosphate + NADP(+) = N-acetyl-L-glutamyl 5-phosphate + NADPH + H(+). It functions in the pathway amino-acid biosynthesis; L-arginine biosynthesis; N(2)-acetyl-L-ornithine from L-glutamate: step 3/4. In terms of biological role, catalyzes the NADPH-dependent reduction of N-acetyl-5-glutamyl phosphate to yield N-acetyl-L-glutamate 5-semialdehyde. This chain is N-acetyl-gamma-glutamyl-phosphate reductase, found in Pelotomaculum thermopropionicum (strain DSM 13744 / JCM 10971 / SI).